A 306-amino-acid chain; its full sequence is Protoheme IX farnesyltransferase (306 aa).

8 consecutive transmembrane segments (helical) span residues 31–50 (VIEL…QGGW), 55–77 (LILG…NCYI), 104–124 (LVFA…ISNW), 125–145 (LAAA…TLWL), 168–188 (WAAV…IVFL), 218–235 (GRAA…ATLA), 238–258 (LLLI…LAGG), and 286–306 (ASIS…LLPF).

Belongs to the UbiA prenyltransferase family. Protoheme IX farnesyltransferase subfamily.

The protein localises to the cell membrane. It carries out the reaction heme b + (2E,6E)-farnesyl diphosphate + H2O = Fe(II)-heme o + diphosphate. Its pathway is porphyrin-containing compound metabolism; heme O biosynthesis; heme O from protoheme: step 1/1. In terms of biological role, converts heme B (protoheme IX) to heme O by substitution of the vinyl group on carbon 2 of heme B porphyrin ring with a hydroxyethyl farnesyl side group. This chain is Protoheme IX farnesyltransferase, found in Clavibacter sepedonicus (Clavibacter michiganensis subsp. sepedonicus).